Consider the following 248-residue polypeptide: Aspartate/glutamate leucyltransferase (248 aa).

The protein belongs to the R-transferase family. Bpt subfamily.

The protein localises to the cytoplasm. It carries out the reaction N-terminal L-glutamyl-[protein] + L-leucyl-tRNA(Leu) = N-terminal L-leucyl-L-glutamyl-[protein] + tRNA(Leu) + H(+). It catalyses the reaction N-terminal L-aspartyl-[protein] + L-leucyl-tRNA(Leu) = N-terminal L-leucyl-L-aspartyl-[protein] + tRNA(Leu) + H(+). Its function is as follows. Functions in the N-end rule pathway of protein degradation where it conjugates Leu from its aminoacyl-tRNA to the N-termini of proteins containing an N-terminal aspartate or glutamate. This chain is Aspartate/glutamate leucyltransferase, found in Methylobacterium nodulans (strain LMG 21967 / CNCM I-2342 / ORS 2060).